The chain runs to 380 residues: Kappa-type opioid receptor (380 aa).

Residues 1–57 (MEPPVQIFRGEPGPTCSPSTCLPPNGSGWFPGWAEPDGNGSAGSEDVLLEPAHISPV) lie on the Extracellular side of the membrane. N25 and N39 each carry an N-linked (GlcNAc...) asparagine glycan. Residues 58 to 85 (ILVIITAVYSVVFVVGLVGNSLVMFVII) traverse the membrane as a helical segment. The Cytoplasmic segment spans residues 86-95 (RYTKMKTATN). Residues 96–119 (IYIFNLALADALVTTTMPFQSTVY) form a helical membrane-spanning segment. The Extracellular portion of the chain corresponds to 120–132 (LMNSWPFGDVLCK). C131 and C210 form a disulfide bridge. A helical transmembrane segment spans residues 133–154 (VVISIDYYNMFTSIFTLTMMSV). At 155–173 (DRYIAVCHPVKALDFRTPL) the chain is on the cytoplasmic side. A helical transmembrane segment spans residues 174–196 (KAKIINICIWILSSSVGISAIVL). The Extracellular segment spans residues 197–222 (GGTKVREDMEVIECSLQFPDDDYSWW). The chain crosses the membrane as a helical span at residues 223–247 (DLFMKVCVFVFAFVIPVLIIIVCYT). Residues 248–274 (LMILRLKSVRLLSGSREKDRNLRRITR) lie on the Cytoplasmic side of the membrane. The chain crosses the membrane as a helical span at residues 275-296 (LVLVVVAVFVVCWTPIHIFILV). The Extracellular segment spans residues 297-311 (EALGSTAHSTAALSS). Residues 312–333 (YYFCIALGYTNSSLNPILYAFL) traverse the membrane as a helical segment. Residues 334–380 (DENFKRCFRDFCFPIKMRMERQSTSRVRNTVQDPAYVREVDGVNKPV) are Cytoplasmic-facing. The S-palmitoyl cysteine moiety is linked to residue C345.

This sequence belongs to the G-protein coupled receptor 1 family. As to quaternary structure, interacts with NHERF1. Interacts with GABARAPL1.

The protein resides in the cell membrane. Functionally, G-protein coupled opioid receptor that functions as a receptor for endogenous alpha-neoendorphins and dynorphins, but has low affinity for beta-endorphins. Also functions as a receptor for various synthetic opioids and for the psychoactive diterpene salvinorin A. Ligand binding causes a conformation change that triggers signaling via guanine nucleotide-binding proteins (G proteins) and modulates the activity of down-stream effectors, such as adenylate cyclase. Signaling leads to the inhibition of adenylate cyclase activity. Inhibits neurotransmitter release by reducing calcium ion currents and increasing potassium ion conductance. Plays a role in the perception of pain. Plays a role in mediating reduced physical activity upon treatment with synthetic opioids. Plays a role in the regulation of salivation in response to synthetic opioids. May play a role in arousal and regulation of autonomic and neuroendocrine functions. The polypeptide is Kappa-type opioid receptor (OPRK1) (Bos taurus (Bovine)).